Consider the following 224-residue polypeptide: UPF0758 protein VV1_0825 (224 aa).

The tract at residues 1 to 20 is disordered; sequence MSLKNLPSESMPREKLLQRG. In terms of domain architecture, MPN spans 102 to 224; sequence ALTSPQHTKL…VVSFAERGWI (123 aa). H173, H175, and D186 together coordinate Zn(2+). The short motif at 173 to 186 is the JAMM motif element; the sequence is HNHPSGVAEPSQAD.

This sequence belongs to the UPF0758 family.

The polypeptide is UPF0758 protein VV1_0825 (Vibrio vulnificus (strain CMCP6)).